Here is a 219-residue protein sequence, read N- to C-terminus: Uridylate kinase (219 aa).

Position 9 to 10 (9 to 10 (GS)) interacts with ATP. UMP is bound at residue Gly-41. Residues Gly-42 and Arg-46 each contribute to the ATP site. UMP contacts are provided by residues Asp-63 and 110 to 116 (TFPGHTT). Residues Thr-136, Asn-137, Tyr-142, and Asp-145 each coordinate ATP.

It belongs to the UMP kinase family. As to quaternary structure, homohexamer.

It is found in the cytoplasm. It catalyses the reaction UMP + ATP = UDP + ADP. It participates in pyrimidine metabolism; CTP biosynthesis via de novo pathway; UDP from UMP (UMPK route): step 1/1. With respect to regulation, inhibited by UTP. Functionally, catalyzes the reversible phosphorylation of UMP to UDP. This chain is Uridylate kinase, found in Archaeoglobus fulgidus (strain ATCC 49558 / DSM 4304 / JCM 9628 / NBRC 100126 / VC-16).